Here is a 541-residue protein sequence, read N- to C-terminus: Chaperonin GroEL 2 (541 aa).

Residues Thr-30–Pro-33, Lys-51, Asp-87–Thr-91, Gly-415, and Asp-496 contribute to the ATP site.

This sequence belongs to the chaperonin (HSP60) family. As to quaternary structure, forms a cylinder of 14 subunits composed of two heptameric rings stacked back-to-back. Interacts with the co-chaperonin GroES.

Its subcellular location is the cytoplasm. The catalysed reaction is ATP + H2O + a folded polypeptide = ADP + phosphate + an unfolded polypeptide.. Together with its co-chaperonin GroES, plays an essential role in assisting protein folding. The GroEL-GroES system forms a nano-cage that allows encapsulation of the non-native substrate proteins and provides a physical environment optimized to promote and accelerate protein folding. This is Chaperonin GroEL 2 from Gluconacetobacter diazotrophicus (strain ATCC 49037 / DSM 5601 / CCUG 37298 / CIP 103539 / LMG 7603 / PAl5).